Here is a 143-residue protein sequence, read N- to C-terminus: Nucleoside diphosphate kinase (143 aa).

ATP-binding residues include K11, F59, R87, T93, R104, and N114. H117 functions as the Pros-phosphohistidine intermediate in the catalytic mechanism.

It belongs to the NDK family. Homotetramer. Mg(2+) is required as a cofactor.

The protein localises to the cytoplasm. The enzyme catalyses a 2'-deoxyribonucleoside 5'-diphosphate + ATP = a 2'-deoxyribonucleoside 5'-triphosphate + ADP. It carries out the reaction a ribonucleoside 5'-diphosphate + ATP = a ribonucleoside 5'-triphosphate + ADP. In terms of biological role, major role in the synthesis of nucleoside triphosphates other than ATP. The ATP gamma phosphate is transferred to the NDP beta phosphate via a ping-pong mechanism, using a phosphorylated active-site intermediate. This chain is Nucleoside diphosphate kinase, found in Shewanella baltica (strain OS223).